Reading from the N-terminus, the 1085-residue chain is RecBCD enzyme subunit RecC (1085 aa).

Belongs to the RecC family. In terms of assembly, heterotrimer of RecB, RecC and RecD. All subunits contribute to DNA-binding.

In terms of biological role, a helicase/nuclease that prepares dsDNA breaks (DSB) for recombinational DNA repair. Binds to DSBs and unwinds DNA via a highly rapid and processive ATP-dependent bidirectional helicase activity. Holoenzyme degrades any linearized DNA that is unable to undergo homologous recombination. In the holoenzyme this subunit recognizes the wild-type Chi sequence, and when added to isolated RecB increases its ATP-dependent helicase processivity. Unlike the case in E.coli, suppresses RecA-dependent homologous recombination, is instead required for single-strand annealing pathway repair of DSB. The chain is RecBCD enzyme subunit RecC from Mycolicibacterium smegmatis (strain ATCC 700084 / mc(2)155) (Mycobacterium smegmatis).